A 251-amino-acid polypeptide reads, in one-letter code: Hydroxyacylglutathione hydrolase (251 aa).

The Zn(2+) site is built by His-53, His-55, Asp-57, His-58, His-109, Asp-126, and His-164.

The protein belongs to the metallo-beta-lactamase superfamily. Glyoxalase II family. In terms of assembly, monomer. Zn(2+) serves as cofactor.

The catalysed reaction is an S-(2-hydroxyacyl)glutathione + H2O = a 2-hydroxy carboxylate + glutathione + H(+). It functions in the pathway secondary metabolite metabolism; methylglyoxal degradation; (R)-lactate from methylglyoxal: step 2/2. Functionally, thiolesterase that catalyzes the hydrolysis of S-D-lactoyl-glutathione to form glutathione and D-lactic acid. The protein is Hydroxyacylglutathione hydrolase of Wigglesworthia glossinidia brevipalpis.